A 379-amino-acid chain; its full sequence is Proton extrusion protein PxcA (379 aa).

Transmembrane regions (helical) follow at residues 153-173, 254-274, 300-320, and 337-357; these read TLVS…LQQI, AIKN…VCLF, FVII…GWTV, and FIDL…KYWI.

The protein belongs to the CemA family.

Its subcellular location is the cell inner membrane. In terms of biological role, required for H(+) efflux immediately after light irradiation to form a rapid H(+) concentration gradient across the thylakoid membranes. Together with PxcL, contributes to transient H(+) uptake following dark to light transition. The polypeptide is Proton extrusion protein PxcA (Synechococcus sp. (strain RCC307)).